Reading from the N-terminus, the 367-residue chain is Pre-small/secreted glycoprotein (367 aa).

Residues 1 to 33 (MGSGYQLLQLPRERFRKTSFLVWVIILFQRAIS) form the signal peptide. Residue Asn-41 is glycosylated (N-linked (GlcNAc...) asparagine; by host). Disulfide bonds link Cys-109/Cys-136 and Cys-122/Cys-148. N-linked (GlcNAc...) asparagine; by host glycans are attached at residues Asn-205, Asn-229, Asn-239, Asn-258, and Asn-269.

This sequence belongs to the filoviruses glycoprotein family. Homodimer; disulfide-linked. The homodimers are linked by two disulfide bonds in a parallel orientation. As to quaternary structure, monomer. This precursor is processed into mature sGP and delta-peptide by host furin or furin-like proteases. The cleavage site corresponds to the furin optimal cleavage sequence [KR]-X-[KR]-R. In terms of processing, N-glycosylated. Post-translationally, O-glycosylated.

It localises to the secreted. In terms of biological role, seems to possess an anti-inflammatory activity as it can reverse the barrier-decreasing effects of TNF alpha. Might therefore contribute to the lack of inflammatory reaction seen during infection in spite the of extensive necrosis and massive virus production. Does not seem to be involved in activation of primary macrophages. Does not seem to interact specifically with neutrophils. Functionally, viroporin that permeabilizes mammalian cell plasma membranes. It acts by altering permeation of ionic compounds and small molecules. This activity may lead to viral enterotoxic activity. This Epomops franqueti (Franquet's epauletted fruit bat) protein is Pre-small/secreted glycoprotein (GP).